The primary structure comprises 651 residues: Bromodomain-containing protein 7 (651 aa).

Lysine 21 is covalently cross-linked (Glycyl lysine isopeptide (Lys-Gly) (interchain with G-Cter in SUMO2)). Residues 34-103 (VTELSTGSSG…RDRAENEVDR (70 aa)) are disordered. Residues 35 to 45 (TELSTGSSGHD) are compositionally biased toward polar residues. Residues 47-57 (SLFEDRSDHDK) are compositionally biased toward basic and acidic residues. The span at 58–69 (HKDRKRKKRKKG) shows a compositional bias: basic residues. The Nuclear localization signal signature appears at 65-96 (KRKKGEKQAPGEEKGRKRRRVKEDKKKRDRDR). The span at 70–103 (EKQAPGEEKGRKRRRVKEDKKKRDRDRAENEVDR) shows a compositional bias: basic and acidic residues. Glycyl lysine isopeptide (Lys-Gly) (interchain with G-Cter in SUMO2) cross-links involve residues lysine 127, lysine 186, lysine 197, lysine 201, lysine 212, and lysine 241. The Bromo domain maps to 131 to 235 (VEQTPLQEAL…HSGMKILSQE (105 aa)). A disordered region spans residues 252–316 (KTRKQKERTD…RSSNSEREHE (65 aa)). Phosphoserine is present on residues serine 279 and serine 289. Residues 290-316 (PAKDNKRKDKDVLEDKWRSSNSEREHE) are compositionally biased toward basic and acidic residues. A Glycyl lysine isopeptide (Lys-Gly) (interchain with G-Cter in SUMO2) cross-link involves residue lysine 305. N6-acetyllysine is present on lysine 328. Lysine 344 is covalently cross-linked (Glycyl lysine isopeptide (Lys-Gly) (interchain with G-Cter in SUMO2)). At serine 380 the chain carries Phosphoserine. Lysine 389 participates in a covalent cross-link: Glycyl lysine isopeptide (Lys-Gly) (interchain with G-Cter in SUMO2). 3 positions are modified to phosphoserine: serine 475, serine 482, and serine 483. Residues 536–567 (SEEAEVFQRKLDETTRLLRELQEAQNERLSTR) adopt a coiled-coil conformation. Serine 621 carries the post-translational modification Phosphoserine.

As to quaternary structure, interacts with IRF2 and HNRPUL1. Interacts (via N-terminus) with TP53. Interacts (via C-terminus) with EP300. Interacts with BRCA1. Interacts (via bromo domain) with histone H3 (via N-terminus) acetylated at 'Lys-14' (H3K14ac). Has low affinity for histone H3 acetylated at 'Lys-9' (H3K9ac). Has the highest affinity for histone H3 that is acetylated both at 'Lys-9' (H3K9ac) and at 'Lys-14' (H3K14ac). Has very low affinity for non-acetylated histone H3. Interacts (via bromo domain) with histone H4 (via N-terminus) acetylated at 'Lys-8' (H3K8ac) (in vitro). Interacts with TRIM24, PTPN13 and DVL1. Identified in a complex with SMARCA4/BRG1, SMARCC1/BAF155, SMARCE1/BAF57, DPF2/BAF45D and ARID2, subunits of the SWI/SNF-B (PBAF) chromatin remodeling complex. As to expression, ubiquitous.

Its subcellular location is the nucleus. The protein localises to the chromosome. Functionally, acts both as coactivator and as corepressor. May play a role in chromatin remodeling. Transcriptional corepressor that down-regulates the expression of target genes. Binds to target promoters, leading to increased histone H3 acetylation at 'Lys-9' (H3K9ac). Binds to the ESR1 promoter. Recruits BRCA1 and POU2F1 to the ESR1 promoter. Coactivator for TP53-mediated activation of transcription of a set of target genes. Required for TP53-mediated cell-cycle arrest in response to oncogene activation. Promotes acetylation of TP53 at 'Lys-382', and thereby promotes efficient recruitment of TP53 to target promoters. Inhibits cell cycle progression from G1 to S phase. Activator of the Wnt signaling pathway in a DVL1-dependent manner by negatively regulating the GSK3B phosphotransferase activity. Induces dephosphorylation of GSK3B at 'Tyr-216'. Down-regulates TRIM24-mediated activation of transcriptional activation by AR. The sequence is that of Bromodomain-containing protein 7 (Brd7) from Mus musculus (Mouse).